The sequence spans 276 residues: Urease accessory protein UreD (276 aa).

This sequence belongs to the UreD family. In terms of assembly, ureD, UreF and UreG form a complex that acts as a GTP-hydrolysis-dependent molecular chaperone, activating the urease apoprotein by helping to assemble the nickel containing metallocenter of UreC. The UreE protein probably delivers the nickel.

It is found in the cytoplasm. In terms of biological role, required for maturation of urease via the functional incorporation of the urease nickel metallocenter. The chain is Urease accessory protein UreD from Variovorax paradoxus (strain S110).